The primary structure comprises 388 residues: Dual-specificity RNA methyltransferase RlmN (388 aa).

The active-site Proton acceptor is the Glu109. Residues 115-354 (EEDRATLCVS…TIVRKTRGDD (240 aa)) enclose the Radical SAM core domain. Cys122 and Cys359 are oxidised to a cystine. 3 residues coordinate [4Fe-4S] cluster: Cys129, Cys133, and Cys136. Residues 183–184 (GE), Ser215, 237–239 (SLH), and Asn316 each bind S-adenosyl-L-methionine. Cys359 (S-methylcysteine intermediate) is an active-site residue.

Belongs to the radical SAM superfamily. RlmN family. The cofactor is [4Fe-4S] cluster.

The protein localises to the cytoplasm. The enzyme catalyses adenosine(2503) in 23S rRNA + 2 reduced [2Fe-2S]-[ferredoxin] + 2 S-adenosyl-L-methionine = 2-methyladenosine(2503) in 23S rRNA + 5'-deoxyadenosine + L-methionine + 2 oxidized [2Fe-2S]-[ferredoxin] + S-adenosyl-L-homocysteine. The catalysed reaction is adenosine(37) in tRNA + 2 reduced [2Fe-2S]-[ferredoxin] + 2 S-adenosyl-L-methionine = 2-methyladenosine(37) in tRNA + 5'-deoxyadenosine + L-methionine + 2 oxidized [2Fe-2S]-[ferredoxin] + S-adenosyl-L-homocysteine. Its function is as follows. Specifically methylates position 2 of adenine 2503 in 23S rRNA and position 2 of adenine 37 in tRNAs. m2A2503 modification seems to play a crucial role in the proofreading step occurring at the peptidyl transferase center and thus would serve to optimize ribosomal fidelity. The sequence is that of Dual-specificity RNA methyltransferase RlmN from Klebsiella pneumoniae subsp. pneumoniae (strain ATCC 700721 / MGH 78578).